The following is a 392-amino-acid chain: Speckle-type POZ protein-like (392 aa).

Residues 31-161 (KFSYMWTINN…DDKLTLFCEV (131 aa)) form the MATH domain. The 68-residue stretch at 200–267 (TDCCFFVRGK…VYTGKAPNLD (68 aa)) folds into the BTB domain.

It belongs to the Tdpoz family. As to quaternary structure, homodimer. Heterodimer with SPOP. Component of cullin-RING-based BCR (BTB-CUL3-RBX1) E3 ubiquitin-protein ligase complexes containing homodimeric SPOPL or the heterodimer formed by SPOP and SPOPL. Interacts with CUL3 and MACROH2A1.

The protein resides in the nucleus. Its pathway is protein modification; protein ubiquitination. In terms of biological role, component of a cullin-RING-based BCR (BTB-CUL3-RBX1) E3 ubiquitin-protein ligase complex that mediates the ubiquitination and subsequent proteasomal degradation of target proteins, but with relatively low efficiency. Cullin-RING-based BCR (BTB-CUL3-RBX1) E3 ubiquitin-protein ligase complexes containing homodimeric SPOPL or the heterodimer formed by SPOP and SPOPL are less efficient than ubiquitin ligase complexes containing only SPOP. May function to down-regulate the activity of cullin-RING-based BCR (BTB-CUL3-RBX1) E3 ubiquitin-protein ligase complexes that contain SPOP. This is Speckle-type POZ protein-like (Spopl) from Mus musculus (Mouse).